The chain runs to 253 residues: Hydroxyacylglutathione hydrolase (253 aa).

Zn(2+)-binding residues include His54, His56, Asp58, His59, His112, Asp131, and His169.

The protein belongs to the metallo-beta-lactamase superfamily. Glyoxalase II family. As to quaternary structure, monomer. The cofactor is Zn(2+).

It carries out the reaction an S-(2-hydroxyacyl)glutathione + H2O = a 2-hydroxy carboxylate + glutathione + H(+). It functions in the pathway secondary metabolite metabolism; methylglyoxal degradation; (R)-lactate from methylglyoxal: step 2/2. Thiolesterase that catalyzes the hydrolysis of S-D-lactoyl-glutathione to form glutathione and D-lactic acid. The chain is Hydroxyacylglutathione hydrolase from Bartonella tribocorum (strain CIP 105476 / IBS 506).